The chain runs to 387 residues: Pepsin A (387 aa).

Positions 1–16 (MKKLLLLLGLVALSEC) are cleaved as a signal peptide. A propeptide spans 17–61 (LYKVPLVKKKSLRQNLIENGLLKDFLAKHNVNPASKYFPTEAATE) (activation peptide). Positions 75–384 (YFGTIGIGTP…DRGNNRVGLA (310 aa)) constitute a Peptidase A1 domain. Residue aspartate 93 is part of the active site. A disulfide bond links cysteine 106 and cysteine 111. Serine 129 bears the Phosphoserine mark. Cysteines 267 and 271 form a disulfide. Residue aspartate 276 is part of the active site. Cysteine 310 and cysteine 343 are oxidised to a cystine.

It belongs to the peptidase A1 family.

Its subcellular location is the secreted. It catalyses the reaction Preferential cleavage: hydrophobic, preferably aromatic, residues in P1 and P1' positions. Cleaves 1-Phe-|-Val-2, 4-Gln-|-His-5, 13-Glu-|-Ala-14, 14-Ala-|-Leu-15, 15-Leu-|-Tyr-16, 16-Tyr-|-Leu-17, 23-Gly-|-Phe-24, 24-Phe-|-Phe-25 and 25-Phe-|-Tyr-26 bonds in the B chain of insulin.. Its function is as follows. Shows particularly broad specificity; although bonds involving phenylalanine and leucine are preferred, many others are also cleaved to some extent. This Suncus murinus (Asian house shrew) protein is Pepsin A (PGA).